A 319-amino-acid polypeptide reads, in one-letter code: Probable NAD(P)H-dependent D-xylose reductase xyl1 (319 aa).

Catalysis depends on Tyr-50, which acts as the Proton donor. His-112 is a substrate binding site. NAD(+)-binding positions include 166–167, 215–224, and 271–281; these read SN, SSFGPLSFLE, and KSNNPTRLSQN.

Belongs to the aldo/keto reductase family.

It catalyses the reaction xylitol + NAD(+) = D-xylose + NADH + H(+). The catalysed reaction is xylitol + NADP(+) = D-xylose + NADPH + H(+). It participates in carbohydrate metabolism; D-xylose degradation. Catalyzes the initial reaction in the xylose utilization pathway by reducing D-xylose into xylitol. Xylose is a major component of hemicelluloses such as xylan. Most fungi utilize D-xylose via three enzymatic reactions, xylose reductase (XR), xylitol dehydrogenase (XDH), and xylulokinase, to form xylulose 5-phosphate, which enters pentose phosphate pathway. The sequence is that of Probable NAD(P)H-dependent D-xylose reductase xyl1 (xyl1) from Aspergillus oryzae (strain ATCC 42149 / RIB 40) (Yellow koji mold).